Consider the following 164-residue polypeptide: S-ribosylhomocysteine lyase (164 aa).

Positions 61, 65, and 131 each coordinate Fe cation.

It belongs to the LuxS family. As to quaternary structure, homodimer. It depends on Fe cation as a cofactor.

It carries out the reaction S-(5-deoxy-D-ribos-5-yl)-L-homocysteine = (S)-4,5-dihydroxypentane-2,3-dione + L-homocysteine. Involved in the synthesis of autoinducer 2 (AI-2) which is secreted by bacteria and is used to communicate both the cell density and the metabolic potential of the environment. The regulation of gene expression in response to changes in cell density is called quorum sensing. Catalyzes the transformation of S-ribosylhomocysteine (RHC) to homocysteine (HC) and 4,5-dihydroxy-2,3-pentadione (DPD). This chain is S-ribosylhomocysteine lyase, found in Bifidobacterium longum (strain NCC 2705).